A 1742-amino-acid polypeptide reads, in one-letter code: NACHT and WD repeat domain-containing protein 2 (1742 aa).

LRR repeat units lie at residues 386 to 410 (FYEY…GHIN), 677 to 698 (LEDV…TRPS), 724 to 747 (VKNV…LYLQ), 883 to 906 (YSQE…VTAF), and 925 to 953 (LPKL…SSMD). In terms of domain architecture, NACHT spans 410–737 (NPLIIYGGPC…TLLVWANRHL (328 aa)). WD repeat units lie at residues 963-1004 (LSSS…LLRQ), 1007-1046 (TAQS…LLSE), 1140-1179 (FSGG…SPQL), 1229-1271 (KHNE…ASLQ), 1272-1311 (EISG…AMSN), 1314-1353 (KTGK…IEAV), 1355-1394 (KHEG…NLFR), 1396-1434 (NGQR…RVCN), 1476-1516 (EDGT…ICRR), 1522-1564 (NFLK…VHAS), and 1614-1653 (SLYK…DAAL).

This Homo sapiens (Human) protein is NACHT and WD repeat domain-containing protein 2 (NWD2).